The chain runs to 486 residues: Probable cytosol aminopeptidase (486 aa).

K256 and D261 together coordinate Mn(2+). Residue K268 is part of the active site. Residues D280, D339, and E341 each coordinate Mn(2+). R343 is a catalytic residue.

This sequence belongs to the peptidase M17 family. Mn(2+) serves as cofactor.

It localises to the cytoplasm. The enzyme catalyses Release of an N-terminal amino acid, Xaa-|-Yaa-, in which Xaa is preferably Leu, but may be other amino acids including Pro although not Arg or Lys, and Yaa may be Pro. Amino acid amides and methyl esters are also readily hydrolyzed, but rates on arylamides are exceedingly low.. It carries out the reaction Release of an N-terminal amino acid, preferentially leucine, but not glutamic or aspartic acids.. In terms of biological role, presumably involved in the processing and regular turnover of intracellular proteins. Catalyzes the removal of unsubstituted N-terminal amino acids from various peptides. This is Probable cytosol aminopeptidase from Synechococcus sp. (strain ATCC 27144 / PCC 6301 / SAUG 1402/1) (Anacystis nidulans).